The following is a 280-amino-acid chain: UPF0276 protein CC_2906 (280 aa).

The protein belongs to the UPF0276 family.

This chain is UPF0276 protein CC_2906, found in Caulobacter vibrioides (strain ATCC 19089 / CIP 103742 / CB 15) (Caulobacter crescentus).